The following is a 125-amino-acid chain: MQWQGRSVRKSTGGRYSPSRGKRRREIGSAPAETHIGIDRRKISRTYGGNNKVRALRCEYAAISNAKTGETKKVKIETVEENAANPNYVRRNLLTRGAIIRTELGRARITSRPGQHGVINAVLIE.

The tract at residues 1 to 34 (MQWQGRSVRKSTGGRYSPSRGKRRREIGSAPAET) is disordered.

The protein belongs to the eukaryotic ribosomal protein eS8 family. As to quaternary structure, part of the 30S ribosomal subunit.

This Methanospirillum hungatei JF-1 (strain ATCC 27890 / DSM 864 / NBRC 100397 / JF-1) protein is Small ribosomal subunit protein eS8.